Here is a 74-residue protein sequence, read N- to C-terminus: Control protein C.MunI (74 aa).

In terms of domain architecture, HTH cro/C1-type spans 12 to 67 (LKKLRKEKTDLSQESFAAQIDLDRTYYSSIENGKRNVSLVNLEKISAGLGITLSEL). The H-T-H motif DNA-binding region spans 23–42 (SQESFAAQIDLDRTYYSSIE).

Functionally, probably controls expression of its associated restriction-modification system MunI. This is Control protein C.MunI from Mycoplasma sp.